The primary structure comprises 209 residues: Pyridoxal 5'-phosphate synthase subunit PdxT (209 aa).

Residue 58–60 (GES) coordinates L-glutamine. C90 (nucleophile) is an active-site residue. L-glutamine is bound by residues R119 and 148-149 (IR). Active-site charge relay system residues include H185 and E187.

The protein belongs to the glutaminase PdxT/SNO family. In the presence of PdxS, forms a dodecamer of heterodimers. Only shows activity in the heterodimer.

It catalyses the reaction aldehydo-D-ribose 5-phosphate + D-glyceraldehyde 3-phosphate + L-glutamine = pyridoxal 5'-phosphate + L-glutamate + phosphate + 3 H2O + H(+). The catalysed reaction is L-glutamine + H2O = L-glutamate + NH4(+). The protein operates within cofactor biosynthesis; pyridoxal 5'-phosphate biosynthesis. Functionally, catalyzes the hydrolysis of glutamine to glutamate and ammonia as part of the biosynthesis of pyridoxal 5'-phosphate. The resulting ammonia molecule is channeled to the active site of PdxS. This is Pyridoxal 5'-phosphate synthase subunit PdxT from Clavibacter michiganensis subsp. michiganensis (strain NCPPB 382).